Consider the following 377-residue polypeptide: Succinyl-diaminopimelate desuccinylase (377 aa).

His66 is a Zn(2+) binding site. The active site involves Asp68. Asp99 serves as a coordination point for Zn(2+). The active-site Proton acceptor is the Glu133. Residues Glu134, Glu162, and His348 each coordinate Zn(2+).

It belongs to the peptidase M20A family. DapE subfamily. As to quaternary structure, homodimer. Requires Zn(2+) as cofactor. It depends on Co(2+) as a cofactor.

The catalysed reaction is N-succinyl-(2S,6S)-2,6-diaminopimelate + H2O = (2S,6S)-2,6-diaminopimelate + succinate. Its pathway is amino-acid biosynthesis; L-lysine biosynthesis via DAP pathway; LL-2,6-diaminopimelate from (S)-tetrahydrodipicolinate (succinylase route): step 3/3. Its function is as follows. Catalyzes the hydrolysis of N-succinyl-L,L-diaminopimelic acid (SDAP), forming succinate and LL-2,6-diaminopimelate (DAP), an intermediate involved in the bacterial biosynthesis of lysine and meso-diaminopimelic acid, an essential component of bacterial cell walls. The polypeptide is Succinyl-diaminopimelate desuccinylase (Xylella fastidiosa (strain M23)).